Consider the following 230-residue polypeptide: Claudin-2 (230 aa).

The Cytoplasmic portion of the chain corresponds to 1–7 (MASLGLQ). The chain crosses the membrane as a helical span at residues 8-28 (LVGYVLGLLGLLGTVIAMLLP). Residues 29 to 81 (SWRTSSYVGASIVTAVGFSKGLWMECATHSTGITQCDIYSTMLGLPADIQAAQ) are Extracellular-facing. Cys54 and Cys64 are disulfide-bonded. The helical transmembrane segment at 82–102 (AMMVTSSAMSSLACIVSVVGM) threads the bilayer. Residues 103–116 (RCTVFFQESRAKDR) are Cytoplasmic-facing. A helical membrane pass occupies residues 117 to 137 (VAVVGGVFFILGGLLGFIPVA). Residues 138-162 (WNLHGILRDFYSPLVPDSMKFEIGE) lie on the Extracellular side of the membrane. A helical transmembrane segment spans residues 163 to 183 (ALYLGIISSLFSLIAGIFLCF). Residues 184–230 (SCSPQGNRSNYYDAYQAQPLATRSSPRPGQAPKGKSEFNSYSLTGYV) lie on the Cytoplasmic side of the membrane. Residues 205-230 (TRSSPRPGQAPKGKSEFNSYSLTGYV) are disordered. Residue Lys218 forms a Glycyl lysine isopeptide (Lys-Gly) (interchain with G-Cter in SUMO) linkage. Phosphoserine occurs at positions 219 and 223. Residues 220–230 (EFNSYSLTGYV) show a composition bias toward polar residues. The interaction with TJP1, TJP2 and TJP3 stretch occupies residues 229 to 230 (YV).

Belongs to the claudin family. Can form homo- and heteropolymers with other claudins to mediate paracellular barrier and channel functions of tight junctions in response to physiological stimuli. Homopolymers interact with CLDN3, but not CLDN1, homopolymers. Directly interacts with TJP1/ZO-1, TJP2/ZO-2 and TJP3/ZO-3. Post-translationally, the disulfide bond is necessary for pore formation, but is not required for correct protein trafficking.

The protein localises to the cell junction. The protein resides in the tight junction. Its subcellular location is the cell membrane. The enzyme catalyses Na(+)(in) = Na(+)(out). It catalyses the reaction K(+)(in) = K(+)(out). It carries out the reaction Rb(+)(in) = Rb(+)(out). The catalysed reaction is Li(+)(in) = Li(+)(out). The enzyme catalyses Cs(+)(in) = Cs(+)(out). It catalyses the reaction Ca(2+)(in) = Ca(2+)(out). It carries out the reaction methylamine(out) = methylamine(in). The catalysed reaction is choline(out) = choline(in). The enzyme catalyses H2O(in) = H2O(out). Functionally, forms paracellular channels: polymerizes in tight junction strands with cation- and water-selective channels through the strands, conveying epithelial permeability in a process known as paracellular tight junction permeability. In intestinal epithelium, allows for sodium and water fluxes from the peritoneal side to the lumen of the intestine to regulate nutrient absorption and clear enteric pathogens as part of mucosal immune response. In kidney, allows passive sodium and calcium reabsorption across proximal tubules from the lumen back to the bloodstream. In the hepatobiliary tract, allows paracellular water and cation fluxes in the hepatic perivenous areas and biliary epithelium to generate bile flow and maintain osmotic gradients. The chain is Claudin-2 (CLDN2) from Bos taurus (Bovine).